The primary structure comprises 278 residues: 1-acyl-sn-glycerol-3-phosphate acyltransferase beta (278 aa).

A signal peptide spans 1 to 23 (MELWPCLAAALLLLLLLVQLSRA). Over 24–29 (AEFYAK) the chain is Lumenal. Residues 30-50 (VALYCALCFTVSAVASLVCLL) traverse the membrane as a helical segment. At 51 to 121 (RHGGRTVENM…PERCVQIAKR (71 aa)) the chain is on the cytoplasmic side. The short motif at 98 to 103 (HQSILD) is the HXXXXD motif element. Residues 122–142 (ELLFLGPVGLIMYLGGVFFIN) form a helical membrane-spanning segment. Residues 143-278 (RQRSSTAMTV…TAGSGVQPAQ (136 aa)) lie on the Lumenal side of the membrane. The EGTR motif signature appears at 172–175 (EGTR).

The protein belongs to the 1-acyl-sn-glycerol-3-phosphate acyltransferase family. In terms of tissue distribution, expressed predominantly in adipose tissue, pancreas and liver.

It is found in the endoplasmic reticulum membrane. The catalysed reaction is a 1-acyl-sn-glycero-3-phosphate + an acyl-CoA = a 1,2-diacyl-sn-glycero-3-phosphate + CoA. It catalyses the reaction 1-(9Z-octadecenoyl)-sn-glycero-3-phosphate + (9Z)-octadecenoyl-CoA = 1,2-di-(9Z-octadecenoyl)-sn-glycero-3-phosphate + CoA. It carries out the reaction 1-(9Z-octadecenoyl)-sn-glycero-3-phosphate + hexadecanoyl-CoA = 1-(9Z)-octadecenoyl-2-hexadecanoyl-sn-glycero-3-phosphate + CoA. The enzyme catalyses heptadecanoyl-CoA + 1-(9Z-octadecenoyl)-sn-glycero-3-phosphate = 1-(9Z)-octadecenoyl-2-heptadecanoyl-sn-glycero-3-phosphate + CoA. The catalysed reaction is 1-(9Z-octadecenoyl)-sn-glycero-3-phosphate + (9Z,12Z)-octadecadienoyl-CoA = 1-(9Z)-octadecenoyl-2-(9Z,12Z)-octadecadienoyl-sn-glycero-3-phosphate + CoA. It catalyses the reaction 1-(9Z-octadecenoyl)-sn-glycero-3-phosphate + tetradecanoyl-CoA = 1-(9Z)-octadecenoyl-2-tetradecanoyl-sn-glycero-3-phosphate + CoA. It carries out the reaction pentadecanoyl-CoA + 1-(9Z-octadecenoyl)-sn-glycero-3-phosphate = 1-(9Z)-octadecenoyl-2-pentadecanoyl-sn-glycero-3-phosphate + CoA. The enzyme catalyses 1-hexadecanoyl-sn-glycero-3-phosphate + (9Z)-octadecenoyl-CoA = 1-hexadecanoyl-2-(9Z-octadecenoyl)-sn-glycero-3-phosphate + CoA. The catalysed reaction is 1-tetradecanoyl-sn-glycerol 3-phosphate + (9Z)-octadecenoyl-CoA = 1-tetradecanoyl-2-(9Z)-octadecenoyl-sn-glycero-3-phosphate + CoA. It catalyses the reaction 1-(9Z,12Z,15Z)-octadecatrienoyl-sn-glycero-3-phosphate + (9Z)-octadecenoyl-CoA = 1-(9Z,12Z,15Z)-octadecatrienoyl-2-(9Z)-octadecenoyl-sn-glycero-3-phosphate + CoA. It carries out the reaction 1-(6Z,9Z,12Z-octadecatrienoyl)-sn-glycero-3-phosphate + (9Z)-octadecenoyl-CoA = (6Z,9Z,12Z)-octadecatrienoyl-2-(9Z)-octadecenoyl-sn-glycero-3-phosphate + CoA. The enzyme catalyses 1-eicosanoyl-sn-glycero-3-phosphate + (9Z)-octadecenoyl-CoA = 1-eicosanoyl-2-(9Z)-octadecenoyl-sn-glycero-3-phosphate + CoA. The catalysed reaction is 1-hexadecanoyl-sn-glycero-3-phosphate + octadecanoyl-CoA = 1-hexadecanoyl-2-octadecanoyl-sn-glycero-3-phosphate + CoA. It catalyses the reaction 1-hexadecanoyl-sn-glycero-3-phosphate + (5Z,8Z,11Z,14Z)-eicosatetraenoyl-CoA = 1-hexadecanoyl-2-(5Z,8Z,11Z,14Z-eicosatetraenoyl)-sn-glycero-3-phosphate + CoA. It carries out the reaction 1-hexadecanoyl-sn-glycero-3-phosphate + hexadecanoyl-CoA = 1,2-dihexadecanoyl-sn-glycero-3-phosphate + CoA. The enzyme catalyses 1-hexadecanoyl-sn-glycero-3-phosphate + tetradecanoyl-CoA = 1-hexadecanoyl-2-tetradecanoyl-sn-glycero-3-phosphate + CoA. The catalysed reaction is (11Z)-octadecenoyl-CoA + 1-(9Z-octadecenoyl)-sn-glycero-3-phosphate = 1-(9Z)-octadecenoyl-2-(11Z)-octadecenoyl-sn-glycero-3-phosphate + CoA. It functions in the pathway phospholipid metabolism; CDP-diacylglycerol biosynthesis; CDP-diacylglycerol from sn-glycerol 3-phosphate: step 2/3. Functionally, converts 1-acyl-sn-glycerol-3-phosphate (lysophosphatidic acid or LPA) into 1,2-diacyl-sn-glycerol-3-phosphate (phosphatidic acid or PA) by incorporating an acyl moiety at the sn-2 position of the glycerol backbone. The polypeptide is 1-acyl-sn-glycerol-3-phosphate acyltransferase beta (AGPAT2) (Homo sapiens (Human)).